The following is a 351-amino-acid chain: Phosphoribosylformylglycinamidine cyclo-ligase (351 aa).

Belongs to the AIR synthase family.

It is found in the cytoplasm. The catalysed reaction is 2-formamido-N(1)-(5-O-phospho-beta-D-ribosyl)acetamidine + ATP = 5-amino-1-(5-phospho-beta-D-ribosyl)imidazole + ADP + phosphate + H(+). It participates in purine metabolism; IMP biosynthesis via de novo pathway; 5-amino-1-(5-phospho-D-ribosyl)imidazole from N(2)-formyl-N(1)-(5-phospho-D-ribosyl)glycinamide: step 2/2. The polypeptide is Phosphoribosylformylglycinamidine cyclo-ligase (Burkholderia vietnamiensis (strain G4 / LMG 22486) (Burkholderia cepacia (strain R1808))).